The primary structure comprises 1009 residues: Cilia- and flagella-associated protein 70 (1009 aa).

Basic and acidic residues predominate over residues 410–428 (NLKEDKPVKEKDIDGRPRP). The interval 410 to 457 (NLKEDKPVKEKDIDGRPRPGDVQAPSIKSQSSDTPLEGEPPLSHNPEG) is disordered. 7 TPR repeats span residues 498 to 531 (PPLTRRTGGAQKAVSDYHTQIKNISRAILDEYYR), 635 to 668 (SEQLRLFAFEAEVNENFEMAAAYYKERLVREPQN), 669 to 702 (LDHWLDYGVFCLLTEDNIKAQECFRKALSLNQSH), 704 to 736 (HSLLLCGVLAVLLENYEQAEIFFEDATCLEPTN), 888 to 921 (HFIFLRLGLIYLEEKEYEKAKKTYMQACKRSPSC), 923 to 954 (TWLGLGIACYRLEELTEAEDALSEANALNNYN), and 956 to 988 (EVWAYLALVCLKVGRQLEAEQAYKYMIKLKLKD).

It belongs to the CFAP70 family.

The protein resides in the cell projection. It is found in the cilium. Its subcellular location is the flagellum. It localises to the cytoplasm. The protein localises to the cytoskeleton. The protein resides in the flagellum basal body. It is found in the cilium axoneme. Its function is as follows. Axoneme-binding protein that plays a role in the regulation of ciliary motility and cilium length. The chain is Cilia- and flagella-associated protein 70 from Macaca fascicularis (Crab-eating macaque).